The chain runs to 267 residues: 5'-nucleotidase SurE (267 aa).

A divalent metal cation is bound by residues aspartate 9, aspartate 10, serine 40, and asparagine 97.

This sequence belongs to the SurE nucleotidase family. A divalent metal cation serves as cofactor.

It is found in the cytoplasm. It catalyses the reaction a ribonucleoside 5'-phosphate + H2O = a ribonucleoside + phosphate. Its function is as follows. Nucleotidase that shows phosphatase activity on nucleoside 5'-monophosphates. The protein is 5'-nucleotidase SurE of Helicobacter pylori (strain J99 / ATCC 700824) (Campylobacter pylori J99).